Here is a 389-residue protein sequence, read N- to C-terminus: Phospho-N-acetylmuramoyl-pentapeptide-transferase (389 aa).

The next 10 membrane-spanning stretches (helical) occupy residues 25–45, 73–93, 97–117, 135–155, 190–210, 222–242, 258–278, 286–306, 311–331, and 366–386; these read RAVMATVTALLIGLAAGPWVI, TMGGVLILIGIFVSCMLWADL, FIWIVMIVTFGFGAVGWVDDY, FWQTLIGLFAAIYLAFSVSEI, VSYPLGMMGFIILSYLVIVGS, GLVIMPVILVGAALGAFAYVM, GAGELMIFCGAMGGAGLAFLW, VFMGDVGALALGGALGTIAVI, IVLFVMGGIFVAETVSVMMQV, and QVVVRFWIITILLVLIGLSSL.

This sequence belongs to the glycosyltransferase 4 family. MraY subfamily. Requires Mg(2+) as cofactor.

The protein resides in the cell inner membrane. The enzyme catalyses UDP-N-acetyl-alpha-D-muramoyl-L-alanyl-gamma-D-glutamyl-meso-2,6-diaminopimeloyl-D-alanyl-D-alanine + di-trans,octa-cis-undecaprenyl phosphate = di-trans,octa-cis-undecaprenyl diphospho-N-acetyl-alpha-D-muramoyl-L-alanyl-D-glutamyl-meso-2,6-diaminopimeloyl-D-alanyl-D-alanine + UMP. It functions in the pathway cell wall biogenesis; peptidoglycan biosynthesis. Functionally, catalyzes the initial step of the lipid cycle reactions in the biosynthesis of the cell wall peptidoglycan: transfers peptidoglycan precursor phospho-MurNAc-pentapeptide from UDP-MurNAc-pentapeptide onto the lipid carrier undecaprenyl phosphate, yielding undecaprenyl-pyrophosphoryl-MurNAc-pentapeptide, known as lipid I. The chain is Phospho-N-acetylmuramoyl-pentapeptide-transferase from Polynucleobacter asymbioticus (strain DSM 18221 / CIP 109841 / QLW-P1DMWA-1) (Polynucleobacter necessarius subsp. asymbioticus).